The following is a 341-amino-acid chain: G2/mitotic-specific cyclin C13-1 (341 aa).

It belongs to the cyclin family. Cyclin AB subfamily.

In terms of biological role, essential for the control of the cell cycle at the G2/M (mitosis) transition. Interacts with the CDC2 and CDK2 protein kinases to form MPF. G2/M cyclins accumulate steadily during G2 and are abruptly destroyed at mitosis. The chain is G2/mitotic-specific cyclin C13-1 from Daucus carota (Wild carrot).